A 105-amino-acid chain; its full sequence is Cell division protein FtsL (105 aa).

At Met-1 to Lys-24 the chain is on the cytoplasmic side. A helical membrane pass occupies residues Ala-25 to Gln-45. At Thr-46–Glu-105 the chain is on the extracellular side.

This sequence belongs to the FtsL family.

It is found in the cell membrane. Its function is as follows. Essential cell division protein. This chain is Cell division protein FtsL, found in Streptococcus pneumoniae (strain ATCC BAA-255 / R6).